Reading from the N-terminus, the 426-residue chain is Glutamate-1-semialdehyde 2,1-aminomutase (426 aa).

The residue at position 265 (Lys-265) is an N6-(pyridoxal phosphate)lysine.

Belongs to the class-III pyridoxal-phosphate-dependent aminotransferase family. HemL subfamily. In terms of assembly, homodimer. Requires pyridoxal 5'-phosphate as cofactor.

The protein resides in the cytoplasm. The enzyme catalyses (S)-4-amino-5-oxopentanoate = 5-aminolevulinate. It participates in porphyrin-containing compound metabolism; protoporphyrin-IX biosynthesis; 5-aminolevulinate from L-glutamyl-tRNA(Glu): step 2/2. This is Glutamate-1-semialdehyde 2,1-aminomutase from Actinobacillus pleuropneumoniae serotype 3 (strain JL03).